Reading from the N-terminus, the 163-residue chain is Ankyrin repeat domain-containing protein 37 (163 aa).

3 ANK repeats span residues 29-58 (LGQSPAHLAACGGQAFFLLWQLQTGVDVNQ), 62-91 (FGEAPIHKAARSGSMECLSLLIASDARIDM), and 95-124 (DGHTAEDVALSCGFLDCARYLATIKLTQDT). The Nuclear localization signal motif lies at 129-149 (QSSLHNLKETAAGVKRGQCCQ).

It localises to the nucleus. The protein localises to the cytoplasm. The polypeptide is Ankyrin repeat domain-containing protein 37 (ankrd37) (Xenopus tropicalis (Western clawed frog)).